The sequence spans 528 residues: Tubulin-specific chaperone E (528 aa).

The 45-residue stretch at 27–71 (GLVPPVAGLWLGVEWDNPERGKHDGSHEGTVYFKCRHPTAGSFIR) folds into the CAP-Gly domain. LRR repeat units follow at residues 152–176 (CPNI…DIAD), 178–206 (LKHL…TFPT), 207–229 (LKVL…ASGW), 231–253 (VLEK…DVLQ), 254–274 (TVKL…LFLI), 279–300 (RLEQ…DAGI), and 309–330 (SLQY…NELD). Residues 343 to 385 (NPLTEGSKDAQTTRQFIIARIGQLRTLNKCAIEPEERRGAELD) form the LRRCT domain. Lysine 464 carries the N6-acetyllysine modification. Serine 496 is subject to Phosphoserine.

The protein belongs to the TBCE family. As to quaternary structure, supercomplex made of cofactors A to E. Cofactors A and D function by capturing and stabilizing tubulin in a quasi-native conformation. Cofactor E binds to the cofactor D-tubulin complex; interaction with cofactor C then causes the release of tubulin polypeptides that are committed to the native state. Cofactors B and E can form a heterodimer which binds to alpha-tubulin and enhances their ability to dissociate tubulin heterodimers. Interacts with TBCD.

The protein resides in the cytoplasm. The protein localises to the cytoskeleton. Tubulin-folding protein; involved in the second step of the tubulin folding pathway and in the regulation of tubulin heterodimer dissociation. Required for correct organization of microtubule cytoskeleton and mitotic splindle, and maintenance of the neuronal microtubule network. This chain is Tubulin-specific chaperone E (TBCE), found in Bos taurus (Bovine).